A 358-amino-acid polypeptide reads, in one-letter code: 4-hydroxy-3-methylbut-2-en-1-yl diphosphate synthase (flavodoxin) (358 aa).

The [4Fe-4S] cluster site is built by cysteine 270, cysteine 273, cysteine 305, and glutamate 312.

The protein belongs to the IspG family. The cofactor is [4Fe-4S] cluster.

The enzyme catalyses (2E)-4-hydroxy-3-methylbut-2-enyl diphosphate + oxidized [flavodoxin] + H2O + 2 H(+) = 2-C-methyl-D-erythritol 2,4-cyclic diphosphate + reduced [flavodoxin]. The protein operates within isoprenoid biosynthesis; isopentenyl diphosphate biosynthesis via DXP pathway; isopentenyl diphosphate from 1-deoxy-D-xylulose 5-phosphate: step 5/6. Its function is as follows. Converts 2C-methyl-D-erythritol 2,4-cyclodiphosphate (ME-2,4cPP) into 1-hydroxy-2-methyl-2-(E)-butenyl 4-diphosphate. The protein is 4-hydroxy-3-methylbut-2-en-1-yl diphosphate synthase (flavodoxin) of Vesicomyosocius okutanii subsp. Calyptogena okutanii (strain HA).